A 598-amino-acid polypeptide reads, in one-letter code: MTDQIAQNSARPAWETSDHIDDQVVNELRQKFGPDAFTFQPTRTGMPVVWVKREQLIEVMQYLKSLPKPYVMLYDLHGVDERVRTHRQGLPAADFSVFYHLISLDRNKDIMLKVALSEKDLNLPTLTSIFPNSNWYEREVWDMFGIVFNGHPNLRRIMMLPNWEGHPLRKDYPARATEFDPYVLTKQKEDLEMESLTFKPEEWGMKRGTENEDFMFLNLGPNHPSSHGAFRIILQLDGEEIVNCVPDVGYHHRGAEKMGERQSWHSYIPYTDRIEYLGGCVNEMPYVLAVEKLAGIEVPERVKVIRVMLSELFRINSHLLYISTFIQDVGAMTPVFFAFTDRQKVYDIVEAITGFRMHPAWFRIGGVAHDLPKGWERLLREFLDWMPKRLDSYVKAALQNSILKGRTIGVASYNAKEALDWGVTGAGLRATGVEFDVRKWRPYSGYENFEFEIPVASNGDCYDRVMLKVEELRQSLRILEQCYKNMPAGPFKADHPLTTPPPKERTLQHIETMINHFLQVSWGPVMPANESFQMVEATKGINSYYLTSDGSTMSYRTRIRTPSFAHLQQIPAVIRGSLVSDLIVYLGSIDFVMSDVDR.

The interval 1–189 (MTDQIAQNSA…DPYVLTKQKE (189 aa)) is NADH dehydrogenase I subunit C. The NADH dehydrogenase I subunit D stretch occupies residues 213–598 (DFMFLNLGPN…IDFVMSDVDR (386 aa)).

This sequence in the N-terminal section; belongs to the complex I 30 kDa subunit family. The protein in the C-terminal section; belongs to the complex I 49 kDa subunit family. NDH-1 is composed of 13 different subunits. Subunits NuoB, CD, E, F, and G constitute the peripheral sector of the complex.

It localises to the cell inner membrane. The enzyme catalyses a quinone + NADH + 5 H(+)(in) = a quinol + NAD(+) + 4 H(+)(out). NDH-1 shuttles electrons from NADH, via FMN and iron-sulfur (Fe-S) centers, to quinones in the respiratory chain. The immediate electron acceptor for the enzyme in this species is believed to be ubiquinone. Couples the redox reaction to proton translocation (for every two electrons transferred, four hydrogen ions are translocated across the cytoplasmic membrane), and thus conserves the redox energy in a proton gradient. In Proteus mirabilis (strain HI4320), this protein is NADH-quinone oxidoreductase subunit C/D.